Here is a 386-residue protein sequence, read N- to C-terminus: Succinate--CoA ligase [ADP-forming] subunit beta (386 aa).

The ATP-grasp domain maps to 9–244 (KEILRKYGVP…HDEEDPLETR (236 aa)). Residues Lys-46, 53–55 (GRG), Glu-99, Cys-102, and Glu-107 contribute to the ATP site. Asn-199 and Asp-213 together coordinate Mg(2+). Substrate is bound by residues Asn-264 and 321–323 (GIM).

Belongs to the succinate/malate CoA ligase beta subunit family. In terms of assembly, heterotetramer of two alpha and two beta subunits. Mg(2+) serves as cofactor.

It carries out the reaction succinate + ATP + CoA = succinyl-CoA + ADP + phosphate. The catalysed reaction is GTP + succinate + CoA = succinyl-CoA + GDP + phosphate. Its pathway is carbohydrate metabolism; tricarboxylic acid cycle; succinate from succinyl-CoA (ligase route): step 1/1. Its function is as follows. Succinyl-CoA synthetase functions in the citric acid cycle (TCA), coupling the hydrolysis of succinyl-CoA to the synthesis of either ATP or GTP and thus represents the only step of substrate-level phosphorylation in the TCA. The beta subunit provides nucleotide specificity of the enzyme and binds the substrate succinate, while the binding sites for coenzyme A and phosphate are found in the alpha subunit. The chain is Succinate--CoA ligase [ADP-forming] subunit beta from Rickettsia rickettsii (strain Iowa).